A 473-amino-acid chain; its full sequence is ATP synthase subunit beta (473 aa).

An ATP-binding site is contributed by 153–160 (GGAGVGKT).

Belongs to the ATPase alpha/beta chains family. In terms of assembly, F-type ATPases have 2 components, CF(1) - the catalytic core - and CF(0) - the membrane proton channel. CF(1) has five subunits: alpha(3), beta(3), gamma(1), delta(1), epsilon(1). CF(0) has three main subunits: a(1), b(2) and c(9-12). The alpha and beta chains form an alternating ring which encloses part of the gamma chain. CF(1) is attached to CF(0) by a central stalk formed by the gamma and epsilon chains, while a peripheral stalk is formed by the delta and b chains.

It localises to the cell inner membrane. The catalysed reaction is ATP + H2O + 4 H(+)(in) = ADP + phosphate + 5 H(+)(out). In terms of biological role, produces ATP from ADP in the presence of a proton gradient across the membrane. The catalytic sites are hosted primarily by the beta subunits. The protein is ATP synthase subunit beta of Rickettsia canadensis (strain McKiel).